Consider the following 957-residue polypeptide: AP2-associated protein kinase 1 (957 aa).

Methionine 1 carries the N-acetylmethionine modification. Residues 1–11 (MKKFFDSRREQ) show a composition bias toward basic and acidic residues. The disordered stretch occupies residues 1–25 (MKKFFDSRREQGGSGLGSGSSGGGG). Over residues 12-25 (GGSGLGSGSSGGGG) the composition is skewed to gly residues. At serine 14 the chain carries Phosphoserine. The Protein kinase domain occupies 46–315 (VTVDEVLAEG…QVSYFSFKLL (270 aa)). ATP is bound by residues 52 to 60 (LAEGGFAIV) and lysine 74. The active-site Proton acceptor is aspartate 176. Tyrosine 234 is subject to Phosphotyrosine. Phosphoserine is present on serine 235. Disordered regions lie at residues 326-506 (NSPI…AVHP) and 563-629 (TAAA…AGHR). Threonine 354 and threonine 389 each carry phosphothreonine. Arginine 391 carries the omega-N-methylarginine modification. Over residues 436-448 (PQAPPTSQQPPSA) the composition is skewed to pro residues. Phosphothreonine is present on threonine 441. 2 stretches are compositionally biased toward low complexity: residues 449 to 506 (PAQA…AVHP) and 563 to 601 (TAAA…KVQT). Threonine 602 carries the phosphothreonine modification. The segment covering 607–617 (IQGQKLGSLTP) has biased composition (polar residues). Serine 614 is subject to Phosphoserine. Threonine 616 is subject to Phosphothreonine. Residues serine 619, serine 620, serine 633, and serine 646 each carry the phosphoserine modification. Residue threonine 649 is modified to Phosphothreonine. The interval 660–697 (SLNKSKSATTTPSGSPRASQQNVYNPSEGSTWNPFDDD) is disordered. Over residues 668–692 (TTTPSGSPRASQQNVYNPSEGSTWN) the composition is skewed to polar residues. Tyrosine 683 carries the phosphotyrosine modification. Serine 727, serine 842, serine 933, and serine 934 each carry phosphoserine. The interval 819 to 956 (EKADVAVESL…SLLLVDQLID (138 aa)) is clathrin-binding domain (CBD). Disordered regions lie at residues 832 to 855 (LEPP…TDSL) and 919 to 941 (VLIT…ESSL). Residues 840 to 855 (LPSQTESVTSNRTDSL) show a composition bias toward polar residues. The span at 927–940 (GGHSRNSSGSSESS) shows a compositional bias: low complexity.

This sequence belongs to the protein kinase superfamily. Ser/Thr protein kinase family. Interacts (via CBD domain) with clathrin. Interacts with AP-2 complex. Interacts with NUMB. Interacts with alpha-adaptin. Interacts with EPS15 isoform 2. Interacts with membrane-bound activated NOTCH1 but not with the inactive full-length form of NOTCH1. Preferentially interacts with monoubiquitinated activated NOTCH1 compared to the non-ubiquitinated form. Autophosphorylated. Detected in brain (at protein level).

Its subcellular location is the cell membrane. It is found in the membrane. The protein resides in the clathrin-coated pit. The protein localises to the presynapse. The catalysed reaction is L-seryl-[protein] + ATP = O-phospho-L-seryl-[protein] + ADP + H(+). The enzyme catalyses L-threonyl-[protein] + ATP = O-phospho-L-threonyl-[protein] + ADP + H(+). With respect to regulation, stimulated by clathrin. Regulates clathrin-mediated endocytosis by phosphorylating the AP2M1/mu2 subunit of the adaptor protein complex 2 (AP-2) which ensures high affinity binding of AP-2 to cargo membrane proteins during the initial stages of endocytosis. Preferentially, may phosphorylate substrates on threonine residues. Regulates phosphorylation of other AP-2 subunits as well as AP-2 localization and AP-2-mediated internalization of ligand complexes. Phosphorylates NUMB and regulates its cellular localization, promoting NUMB localization to endosomes. Binds to and stabilizes the activated form of NOTCH1, increases its localization in endosomes and regulates its transcriptional activity. The protein is AP2-associated protein kinase 1 (AAK1) of Bos taurus (Bovine).